Reading from the N-terminus, the 398-residue chain is S-adenosylmethionine synthase 2 (398 aa).

Position 16 (His16) interacts with ATP. Asp18 is a Mg(2+) binding site. Glu51 is a binding site for K(+). Residues Glu64 and Gln108 each contribute to the L-methionine site. Positions 108–118 (QSADIAQGVDA) are flexible loop. ATP is bound by residues 176-178 (DSK), 242-243 (KF), Asp251, 257-258 (RK), Ala274, and Lys278. L-methionine is bound at residue Asp251. Lys282 is an L-methionine binding site.

Belongs to the AdoMet synthase family. Homotetramer; dimer of dimers. Requires Mg(2+) as cofactor. The cofactor is K(+).

The protein resides in the cytoplasm. It catalyses the reaction L-methionine + ATP + H2O = S-adenosyl-L-methionine + phosphate + diphosphate. Its pathway is amino-acid biosynthesis; S-adenosyl-L-methionine biosynthesis; S-adenosyl-L-methionine from L-methionine: step 1/1. Catalyzes the formation of S-adenosylmethionine (AdoMet) from methionine and ATP. The overall synthetic reaction is composed of two sequential steps, AdoMet formation and the subsequent tripolyphosphate hydrolysis which occurs prior to release of AdoMet from the enzyme. The polypeptide is S-adenosylmethionine synthase 2 (Rhodopseudomonas palustris (strain BisB18)).